The sequence spans 95 residues: Aspartyl/glutamyl-tRNA(Asn/Gln) amidotransferase subunit C (95 aa).

Belongs to the GatC family. Heterotrimer of A, B and C subunits.

It catalyses the reaction L-glutamyl-tRNA(Gln) + L-glutamine + ATP + H2O = L-glutaminyl-tRNA(Gln) + L-glutamate + ADP + phosphate + H(+). The catalysed reaction is L-aspartyl-tRNA(Asn) + L-glutamine + ATP + H2O = L-asparaginyl-tRNA(Asn) + L-glutamate + ADP + phosphate + 2 H(+). Functionally, allows the formation of correctly charged Asn-tRNA(Asn) or Gln-tRNA(Gln) through the transamidation of misacylated Asp-tRNA(Asn) or Glu-tRNA(Gln) in organisms which lack either or both of asparaginyl-tRNA or glutaminyl-tRNA synthetases. The reaction takes place in the presence of glutamine and ATP through an activated phospho-Asp-tRNA(Asn) or phospho-Glu-tRNA(Gln). In Alcanivorax borkumensis (strain ATCC 700651 / DSM 11573 / NCIMB 13689 / SK2), this protein is Aspartyl/glutamyl-tRNA(Asn/Gln) amidotransferase subunit C.